The sequence spans 162 residues: MTDLYIDADACPVKAEAERVAVRHGVRMFLVSNGGIRPPAHPLVESIFVPEGPDVADMWIADRARTGDVVVTSDIPLAAKVVAAGALVVKPNGETLTQANIGNALATRDLMADLRSADPFRQGGGRPFSKADRSRFLDALERAMRKAQEAGRSASGGNEAGS.

This sequence belongs to the UPF0178 family.

The polypeptide is UPF0178 protein RHOS4_24670 (Cereibacter sphaeroides (strain ATCC 17023 / DSM 158 / JCM 6121 / CCUG 31486 / LMG 2827 / NBRC 12203 / NCIMB 8253 / ATH 2.4.1.) (Rhodobacter sphaeroides)).